The sequence spans 304 residues: Acetylglutamate kinase (304 aa).

Substrate-binding positions include 70 to 71, Arg92, and Asn185; that span reads GG.

The protein belongs to the acetylglutamate kinase family. ArgB subfamily.

It localises to the cytoplasm. The enzyme catalyses N-acetyl-L-glutamate + ATP = N-acetyl-L-glutamyl 5-phosphate + ADP. The protein operates within amino-acid biosynthesis; L-arginine biosynthesis; N(2)-acetyl-L-ornithine from L-glutamate: step 2/4. Functionally, catalyzes the ATP-dependent phosphorylation of N-acetyl-L-glutamate. The protein is Acetylglutamate kinase of Paracoccus denitrificans (strain Pd 1222).